The chain runs to 678 residues: Glycine--tRNA ligase beta subunit (678 aa).

It belongs to the class-II aminoacyl-tRNA synthetase family. As to quaternary structure, tetramer of two alpha and two beta subunits.

The protein localises to the cytoplasm. The catalysed reaction is tRNA(Gly) + glycine + ATP = glycyl-tRNA(Gly) + AMP + diphosphate. In Streptococcus pneumoniae (strain Taiwan19F-14), this protein is Glycine--tRNA ligase beta subunit.